The sequence spans 538 residues: Probable bifunctional riboflavin biosynthesis protein RIBA 1, chloroplastic (538 aa).

A compositionally biased stretch (polar residues) spans 1-16; sequence MSRLSSIYSQHRTSGL. Positions 1–29 are disordered; the sequence is MSRLSSIYSQHRTSGLRSDRSIMPNSTSN. A chloroplast-targeting transit peptide spans 1–73; sequence MSRLSSIYSQ…NGQASPSKVV (73 aa). The DHBP synthase stretch occupies residues 46-311; that stretch reads RNFHISHAVG…IADLIRYRRK (266 aa). D-ribulose 5-phosphate is bound by residues 134–135, Asp139, 249–253, and Glu273; these read RE and RAGHT. Residue Glu135 coordinates Mg(2+). His252 contacts Mg(2+). The segment at 312 to 530 is GTP cyclohydrolase II; it reads RDRLVERVCV…DGGIKKEQDQ (219 aa). GTP is bound at residue 362 to 366; sequence RVHSE. Residues Cys367, Cys378, and Cys380 each contribute to the Zn(2+) site. Residues Gln383, 406 to 408, and Thr428 contribute to the GTP site; that span reads EGR. The Proton acceptor; for GTP cyclohydrolase activity role is filled by Asp440. Arg442 (nucleophile; for GTP cyclohydrolase activity) is an active-site residue. 2 residues coordinate GTP: Thr463 and Lys468. The interval 506-538 is disordered; that stretch reads HVYGTRPSGNTSTLADGGIKKEQDQIDSASEQE.

It in the N-terminal section; belongs to the DHBP synthase family. The protein in the C-terminal section; belongs to the GTP cyclohydrolase II family. Mg(2+) serves as cofactor. It depends on Mn(2+) as a cofactor. Requires Zn(2+) as cofactor.

The protein resides in the plastid. Its subcellular location is the chloroplast. The enzyme catalyses D-ribulose 5-phosphate = (2S)-2-hydroxy-3-oxobutyl phosphate + formate + H(+). It carries out the reaction GTP + 4 H2O = 2,5-diamino-6-hydroxy-4-(5-phosphoribosylamino)-pyrimidine + formate + 2 phosphate + 3 H(+). Its pathway is cofactor biosynthesis; riboflavin biosynthesis; 2-hydroxy-3-oxobutyl phosphate from D-ribulose 5-phosphate: step 1/1. It functions in the pathway cofactor biosynthesis; riboflavin biosynthesis; 5-amino-6-(D-ribitylamino)uracil from GTP: step 1/4. Its function is as follows. Involved in riboflavin biosynthesis. Catalyzes both the conversion of D-ribulose 5-phosphate to formate and 3,4-dihydroxy-2-butanone 4-phosphate and the conversion of GTP to 2,5-diamino-6-ribosylamino-4(3H)-pyrimidinone 5'-phosphate (DARP), formate and pyrophosphate. This is Probable bifunctional riboflavin biosynthesis protein RIBA 1, chloroplastic (RIBA1) from Oryza sativa subsp. japonica (Rice).